The sequence spans 162 residues: Ribonuclease P protein component (162 aa).

The disordered stretch occupies residues 1 to 67 (MDEKDLAAQP…GGKLVSLKGD (67 aa)). The span at 21-31 (GPHEDPRRQEG) shows a compositional bias: basic and acidic residues.

Belongs to the RnpA family. Consists of a catalytic RNA component (M1 or rnpB) and a protein subunit.

The enzyme catalyses Endonucleolytic cleavage of RNA, removing 5'-extranucleotides from tRNA precursor.. In terms of biological role, RNaseP catalyzes the removal of the 5'-leader sequence from pre-tRNA to produce the mature 5'-terminus. It can also cleave other RNA substrates such as 4.5S RNA. The protein component plays an auxiliary but essential role in vivo by binding to the 5'-leader sequence and broadening the substrate specificity of the ribozyme. This is Ribonuclease P protein component from Thermus brockianus.